Consider the following 590-residue polypeptide: Complement component C8 beta chain (590 aa).

Positions 1–32 (MKKSWTWTWRVPAELLLLCAALGCLCVPGSRS) are cleaved as a signal peptide. A propeptide spanning residues 33–54 (ERPRSLEPTVVNRSLAKSRHSR) is cleaved from the precursor. Asn44 is a glycosylation site (N-linked (GlcNAc...) asparagine). In terms of domain architecture, TSP type-1 1 spans 64–117 (DCELSSWSSWTMCDPCQKKRYRHAYLLRPSQFNGEPCNFSDKEVEDCATSRPCR). 7 disulfides stabilise this stretch: Cys65–Cys100, Cys76–Cys110, Cys79–Cys116, Cys122–Cys133, Cys127–Cys146, Cys140–Cys155, and Cys162–Cys200. C-linked (Man) tryptophan glycans are attached at residues Trp70 and Trp73. Residue Asn101 is glycosylated (N-linked (GlcNAc...) asparagine). Residues 120–157 (VRCEGFVCAQTGRCVNRRLLCNGDNDCGDQSDEANCRK) form the LDL-receptor class A domain. Leu138, Asn141, Asp143, Asp145, Asp151, and Glu152 together coordinate Ca(2+). One can recognise an MACPF domain in the interval 158–504 (IYKKCHHEME…EFQGEVSPCR (347 aa)). The next 4 beta stranded transmembrane spans lie at 252-259 (STFNLGFK), 262-269 (SIFEFGIN), 379-386 (AKNDFKLG), and 392-399 (VYVSLGVS). Cys378 and Cys403 are disulfide-bonded. Thr418 carries the phosphothreonine modification. 4 disulfide bridges follow: Cys503–Cys550, Cys505–Cys521, Cys508–Cys523, and Cys525–Cys534. The EGF-like domain occupies 505–535 (CAPCQGNGVPVQKGSRCDCICPVGFQGSACE). A TSP type-1 2 domain is found at 545–588 (DGRWSCWSRWSSCSGGQKTRRRQCNNPAPQDGGSPCSGPASETL). C-linked (Man) tryptophan glycosylation is found at Trp551 and Trp554. Cys557 and Cys590 are joined by a disulfide. The tract at residues 557-590 (CSGGQKTRRRQCNNPAPQDGGSPCSGPASETLAC) is disordered.

It belongs to the complement C6/C7/C8/C9 family. In terms of assembly, heterotrimer of 3 chains: alpha (C8A), beta (C8B) and gamma (C8G); the alpha and gamma chains are disulfide bonded. Component of the membrane attack complex (MAC), composed of complement C5b, C6, C7, C8A, C8B, C8G and multiple copies of the pore-forming subunit C9. Post-translationally, N-glycosylated; contains one or two bound glycans. Not O-glycosylated.

It is found in the secreted. It localises to the target cell membrane. Membrane attack complex (MAC) assembly is inhibited by CD59, thereby protecting self-cells from damage during complement activation. CD59 acts by binding to the beta-haipins of C8 (C8A and C8B), forming an intermolecular beta-sheet that prevents incorporation of the multiple copies of C9 required for complete formation of the osmolytic pore. MAC assembly is also inhibited by clusterin (CLU) chaperones that inhibit polymerization of C9. Functionally, component of the membrane attack complex (MAC), a multiprotein complex activated by the complement cascade, which inserts into a target cell membrane and forms a pore, leading to target cell membrane rupture and cell lysis. The MAC is initiated by proteolytic cleavage of C5 into complement C5b in response to the classical, alternative, lectin and GZMK complement pathways. The complement pathways consist in a cascade of proteins that leads to phagocytosis and breakdown of pathogens and signaling that strengthens the adaptive immune system. C8B, together with C8A and C8G, inserts into the target membrane, but does not form pores by itself. During MAC assembly, associates with C5b, C6 and C7 to form the C5b8 intermediate complex that inserts into the target membrane and traverses the bilayer increasing membrane rigidity. This Oryctolagus cuniculus (Rabbit) protein is Complement component C8 beta chain (C8B).